Consider the following 196-residue polypeptide: Large ribosomal subunit protein mL66 (196 aa).

The N-terminal 34 residues, 1-34, are a transit peptide targeting the mitochondrion; that stretch reads MAALRRLVSGCGRQLQAFLAGPAATGWLWLPARG.

It belongs to the bacterial ribosomal protein bS18 family. Mitochondrion-specific ribosomal protein mL66 subfamily. In terms of assembly, component of the mitochondrial ribosome small subunit (28S) which comprises a 12S rRNA and about 30 distinct proteins.

Its subcellular location is the mitochondrion. This Mus musculus (Mouse) protein is Large ribosomal subunit protein mL66 (Mrps18a).